Consider the following 452-residue polypeptide: Nuclear distribution protein PAC1 (452 aa).

Residues 12-44 enclose the LisH domain; sequence QKDELHKAILAYFSASGLSNTGAALREELGVGD. Positions 64–91 form a coiled coil; sequence TGVLRLQKKIMELESRLSSLQSELDSAT. WD repeat units lie at residues 117–158, 160–200, 204–245, 248–287, 290–350, 352–391, 396–435, and 437–452; these read SHRN…RTVK, HTKA…KNIR, GHDH…CVKT, GHSD…HKAT, GHEH…LKTL, GHDN…RCVK, AHSH…INVR, and VIAT…VFAS.

It belongs to the WD repeat LIS1/nudF family. As to quaternary structure, self-associates. Interacts with NDL1 and dynein.

It is found in the cytoplasm. The protein localises to the cytoskeleton. Its subcellular location is the spindle pole. Positively regulates the activity of the minus-end directed microtubule motor protein dynein. May enhance dynein-mediated microtubule sliding by targeting dynein to the microtubule plus end. Required for nuclear migration during vegetative growth as well as development. Required for retrograde early endosome (EE) transport from the hyphal tip. Required for localization of dynein to the mitotic spindle poles. Recruits additional proteins to the dynein complex at SPBs. The sequence is that of Nuclear distribution protein PAC1 from Tuber melanosporum (strain Mel28) (Perigord black truffle).